Here is a 293-residue protein sequence, read N- to C-terminus: Zinc finger protein 80 (293 aa).

2 C2H2-type zinc fingers span residues 69–91 (YKCK…HQIH) and 97–119 (YECQ…MRIH). Residues 125 to 147 (CKCVECGKVFNRRSHLLCYHQIH) form a C2H2-type 3; atypical zinc finger. C2H2-type zinc fingers lie at residues 153–175 (YECS…RMTH), 181–203 (FGCK…MKIH), 209–231 (YKCG…SMTH), and 237–259 (YECK…TRSH).

It belongs to the krueppel C2H2-type zinc-finger protein family.

The protein resides in the nucleus. Its function is as follows. May be involved in transcriptional regulation. The sequence is that of Zinc finger protein 80 (ZNF80) from Macaca mulatta (Rhesus macaque).